Consider the following 303-residue polypeptide: Type II methyltransferase M.MjaI (303 aa).

It belongs to the N(4)/N(6)-methyltransferase family. N(4) subfamily.

The catalysed reaction is a 2'-deoxycytidine in DNA + S-adenosyl-L-methionine = an N(4)-methyl-2'-deoxycytidine in DNA + S-adenosyl-L-homocysteine + H(+). In terms of biological role, a beta subtype methylase that recognizes the double-stranded sequence 5'-CTAG-3', methylates C-1 on both strands, and protects the DNA from cleavage by the MjaI endonuclease. The sequence is that of Type II methyltransferase M.MjaI (mjaIM) from Methanocaldococcus jannaschii (strain ATCC 43067 / DSM 2661 / JAL-1 / JCM 10045 / NBRC 100440) (Methanococcus jannaschii).